The primary structure comprises 429 residues: Antho-RFamide neuropeptides type 2 (429 aa).

A signal peptide spans 1-22 (MTTVSYVTILLTVLVQVLTSDA). Residues 23–233 (KATNNKRELS…EFQGRFGRED (211 aa)) constitute a propeptide that is removed on maturation. Residues 230-371 (GREDQGRFGR…EDIAKEDQGR (142 aa)) show a composition bias toward basic and acidic residues. Residues 230–429 (GREDQGRFGR…KSDDALAKIS (200 aa)) are disordered. A Pyrrolidone carboxylic acid modification is found at glutamine 234. At phenylalanine 237 the chain carries Phenylalanine amide. The propeptide occupies 239–241 (RED). Glutamine 242 is subject to Pyrrolidone carboxylic acid. Phenylalanine 245 carries the post-translational modification Phenylalanine amide. A propeptide spanning residues 247 to 249 (RED) is cleaved from the precursor. Glutamine 250 is subject to Pyrrolidone carboxylic acid. Residue phenylalanine 253 is modified to Phenylalanine amide. The propeptide occupies 255–257 (RED). Glutamine 258 carries the pyrrolidone carboxylic acid modification. Residue phenylalanine 261 is modified to Phenylalanine amide. Positions 263-265 (RED) are excised as a propeptide. Glutamine 266 carries the pyrrolidone carboxylic acid modification. At phenylalanine 269 the chain carries Phenylalanine amide. Positions 271–273 (RED) are excised as a propeptide. Glutamine 274 is modified (pyrrolidone carboxylic acid). Position 277 is a phenylalanine amide (phenylalanine 277). Positions 279-289 (RELQGRFGRED) are excised as a propeptide. Pyrrolidone carboxylic acid is present on glutamine 290. Position 293 is a phenylalanine amide (phenylalanine 293). The propeptide occupies 295-297 (RED). Glutamine 298 is subject to Pyrrolidone carboxylic acid. Phenylalanine 301 carries the post-translational modification Phenylalanine amide. A propeptide spanning residues 303 to 305 (RED) is cleaved from the precursor. Glutamine 306 is subject to Pyrrolidone carboxylic acid. Phenylalanine amide is present on phenylalanine 309. Positions 311 to 321 (RELQGRFGRED) are excised as a propeptide. Glutamine 322 carries the post-translational modification Pyrrolidone carboxylic acid. The residue at position 325 (phenylalanine 325) is a Phenylalanine amide. A propeptide spanning residues 327 to 329 (RED) is cleaved from the precursor. A Pyrrolidone carboxylic acid modification is found at glutamine 330. Phenylalanine 333 is subject to Phenylalanine amide. A propeptide spanning residues 335-342 (REDLAKED) is cleaved from the precursor. Pyrrolidone carboxylic acid is present on glutamine 343. Position 346 is a phenylalanine amide (phenylalanine 346). Positions 348-355 (REDLAKED) are excised as a propeptide. Pyrrolidone carboxylic acid is present on glutamine 356. Phenylalanine 359 is subject to Phenylalanine amide. A propeptide spanning residues 361–368 (REDIAKED) is cleaved from the precursor. Residue glutamine 369 is modified to Pyrrolidone carboxylic acid. Residue phenylalanine 372 is modified to Phenylalanine amide. A propeptide spanning residues 374 to 429 (RNAAAAAKKRTIDVIDIESDPKPQTRFRDGKDMQEKRKVEKKDKIEKSDDALAKIS) is cleaved from the precursor. Residues 392 to 429 (SDPKPQTRFRDGKDMQEKRKVEKKDKIEKSDDALAKIS) are compositionally biased toward basic and acidic residues.

The protein belongs to the FARP (FMRFamide related peptide) family.

Its subcellular location is the secreted. Not known but it could act as a transmitter at neuromuscular synapses. This is Antho-RFamide neuropeptides type 2 from Anthopleura elegantissima (Green aggregating anemone).